Here is a 369-residue protein sequence, read N- to C-terminus: Protein VP6 (369 aa).

Disordered stretches follow at residues Lys-17–Arg-169 and Leu-184–Arg-208. Basic and acidic residues predominate over residues Leu-29–Lys-68. The segment covering Thr-92–Gly-111 has biased composition (gly residues). Basic and acidic residues-rich tracts occupy residues Thr-137–Thr-148 and Thr-196–Arg-208.

This sequence belongs to the orbivirus VP6 family.

It is found in the virion. The sequence is that of Protein VP6 (Segment-9) from African horse sickness virus (AHSV).